A 285-amino-acid chain; its full sequence is METLLSPRALSPPLNPKPLSLHQTKPTSHSLSLSKPTTFSGPKHLSTRFTKPESRNWLIDAKQGLAALALSLTLTFSPVGTALASEFNILNDGPPKETYVVDDAGVLSRVTKSDLKKLLSDLEYRKKLRLNFITVRKLTSKADAFEYADQVLEKWYPSIEEGNNKGIVVLITSQKEGAITGGPAFIEAVGENILDATVSENLPVLATDEKYNEAVYSSAKRLVAAIDGQPDPGGPTVKDSKRESNFKTKEETDEKRGQFSLVVGGLLVIAFVVPMAQYFAYVSRK.

Disordered stretches follow at residues 1–48 (METL…LSTR) and 228–251 (GQPD…TKEE). Over residues 22–40 (HQTKPTSHSLSLSKPTTFS) the composition is skewed to polar residues. Residues 238 to 251 (KDSKRESNFKTKEE) show a composition bias toward basic and acidic residues. A helical transmembrane segment spans residues 259–279 (FSLVVGGLLVIAFVVPMAQYF).

It belongs to the UPF0603 family.

It is found in the plastid. It localises to the chloroplast thylakoid membrane. This chain is UPF0603 protein At1g54780, chloroplastic, found in Arabidopsis thaliana (Mouse-ear cress).